We begin with the raw amino-acid sequence, 328 residues long: tRNA uridine(34) hydroxylase (328 aa).

Positions leucine 130–glutamate 224 constitute a Rhodanese domain. Cysteine 184 serves as the catalytic Cysteine persulfide intermediate.

This sequence belongs to the TrhO family.

It carries out the reaction uridine(34) in tRNA + AH2 + O2 = 5-hydroxyuridine(34) in tRNA + A + H2O. Catalyzes oxygen-dependent 5-hydroxyuridine (ho5U) modification at position 34 in tRNAs. The chain is tRNA uridine(34) hydroxylase from Streptococcus pyogenes serotype M28 (strain MGAS6180).